We begin with the raw amino-acid sequence, 477 residues long: Prolyl tri/tetrapeptidyl aminopeptidase (477 aa).

The first 27 residues, 1-27, serve as a signal peptide directing secretion; it reads MRKALRSLLAASMLIGAIGAGSATAEA. The propeptide occupies 28–33; sequence ASITAP. The disordered stretch occupies residues 448–477; sequence QKDEKAAKPLAPFDAKLDRVKNDKQSALRP. Basic and acidic residues predominate over residues 462 to 477; it reads AKLDRVKNDKQSALRP.

The protein belongs to the peptidase S37 family.

Its subcellular location is the secreted. The protein resides in the cell surface. Its activity is regulated as follows. Completely inhibited by the serine protease inhibitor phenylmethylsulfonyl fluoride. Partially inhibited by the serine protease inhibitor Pefabloc. Not inhibited by cysteine proteinase-specific or metalloproteinase-specific inhibitors. Not inhibited by prolinal or its derivatives. EDTA and EGTA both partially inhibit this enzyme. EDTA has no effect on activity. Has proline-specific tripeptidyl aminopeptidase and tetrapeptidyl aminopeptidase activity. Activity is highest against tripeptides containing an Ala-Pro motif. Involved in the final processing of transglutaminase, by removing either the tetrapeptide Phe-Arg-Ala-Pro left after TAMEP or SAM-P45 hydrolysis, or the tripeptide Arg-Ala-Pro left after SGMP II hydrolysis in a single step. In Streptomyces mobaraensis (Streptoverticillium mobaraense), this protein is Prolyl tri/tetrapeptidyl aminopeptidase (ptp).